The primary structure comprises 290 residues: Ig delta chain C region membrane-bound form (290 aa).

The 101-residue stretch at 5–105 (PDMFLLSECK…WDSQSSKRVT (101 aa)) folds into the Ig-like 1 domain. A disulfide bridge links Cys-26 with Cys-78. N-linked (GlcNAc...) asparagine glycosylation is found at Asn-58 and Asn-75. The segment at 89 to 111 (PFKFPESWDSQSSKRVTPTLQAK) is disordered. A compositionally biased stretch (polar residues) spans 96–111 (WDSQSSKRVTPTLQAK). N-linked (GlcNAc...) asparagine glycosylation is found at Asn-112, Asn-135, and Asn-227. The Ig-like 2 domain maps to 133 to 233 (PSNLTVNILT…TKLNASKSLA (101 aa)). A helical membrane pass occupies residues 262-279 (GLWPTMCTFVALFLLTLL). Over 280-290 (YSGFVTFIKVK) the chain is Cytoplasmic.

In terms of tissue distribution, cell lines producing IgD contain several mRNA species for Ig delta chains. In plasmacytomas, the secreted form is the major component, and the membrane-bound form is a minor component. In spleen, however, the membrane-bound form is the major component. These two forms differ in their C-terminal segments.

The protein localises to the cell membrane. This Mus musculus (Mouse) protein is Ig delta chain C region membrane-bound form.